The primary structure comprises 264 residues: MPDKKRRVTDFVKGGGPYVWVTAYDYPTAKLVDEAGVDGILVGDSLGMVVLGLPNTLGVTLADMVRHTQAVARAAPKALVVADMPFMTYETGPRDALRNAARLIRAGAEAVKLEGGSEYAHVVEKLVKAGIPVMGHIGLNPQRVLALGGFKMVGKTEEQKKKLVEDAKALRDVGVFAIVVEFVPASVAKEVTQSVDVPTICIGAGPHCDGQILVLHDVVGLSERTPSFAKRYANVAEQILSAVRQYVQEVRTKAFPAKEHYRDV.

Mg(2+) is bound by residues Asp-44 and Asp-83. 3-methyl-2-oxobutanoate-binding positions include 44–45, Asp-83, and Lys-112; that span reads DS. Glu-114 provides a ligand contact to Mg(2+). The Proton acceptor role is filled by Glu-181.

It belongs to the PanB family. In terms of assembly, homodecamer; pentamer of dimers. Mg(2+) is required as a cofactor.

It is found in the cytoplasm. The catalysed reaction is 3-methyl-2-oxobutanoate + (6R)-5,10-methylene-5,6,7,8-tetrahydrofolate + H2O = 2-dehydropantoate + (6S)-5,6,7,8-tetrahydrofolate. It participates in cofactor biosynthesis; coenzyme A biosynthesis. Its function is as follows. Catalyzes the reversible reaction in which hydroxymethyl group from 5,10-methylenetetrahydrofolate is transferred onto alpha-ketoisovalerate to form ketopantoate. This is 3-methyl-2-oxobutanoate hydroxymethyltransferase from Pyrobaculum arsenaticum (strain DSM 13514 / JCM 11321 / PZ6).